The chain runs to 138 residues: Sporulation-specific cell division protein SsgB (138 aa).

The protein belongs to the SsgA family. Monomer. Interacts with SsgA. Interacts with FtsZ (via N-terminus).

The protein localises to the cell septum. Its function is as follows. Involved in sporulation-specific cell division. Required for early stages of sporulation. Important in the process of growth cessation prior to sporulation-specific cell division. Recruits cell division protein FtsZ to the future septum sites and tethers the contractile ring structure (Z ring) to the cytoplasmic membrane during sporulation. Stimulates polymerization and filament length of FtsZ in vitro. The polypeptide is Sporulation-specific cell division protein SsgB (Thermobifida fusca (strain YX)).